We begin with the raw amino-acid sequence, 609 residues long: Replication protein A 70 kDa DNA-binding subunit (609 aa).

The disordered stretch occupies residues 112–164; sequence IGNPHPYNDGQGPPQPAAPAPASAPPPSKPQNISAPPPPSMNRGASKLFGGGS. Over residues 124–151 the composition is skewed to pro residues; sequence PPQPAAPAPASAPPPSKPQNISAPPPPS. Positions 189-273 form a DNA-binding region, OB; that stretch reads WTVRARVTNK…VKNDYEMTFN (85 aa). Residues 472 to 494 form a C4-type zinc finger; sequence CPSQDCNKKVIDQQNGLFRCEKC.

The protein belongs to the replication factor A protein 1 family. Component of the heterotrimeric canonical replication protein A complex (RPA). Interacts with rpain-a.

The protein resides in the nucleus. It localises to the PML body. In terms of biological role, as part of the heterotrimeric replication protein A complex (RPA/RP-A), binds and stabilizes single-stranded DNA intermediates, that form during DNA replication or upon DNA stress. It prevents their reannealing and in parallel, recruits and activates different proteins and complexes involved in DNA metabolism. Thereby, it plays an essential role both in DNA replication and the cellular response to DNA damage. In Xenopus tropicalis (Western clawed frog), this protein is Replication protein A 70 kDa DNA-binding subunit (rpa1).